Reading from the N-terminus, the 94-residue chain is Co-chaperonin GroES (94 aa).

The protein belongs to the GroES chaperonin family. Heptamer of 7 subunits arranged in a ring. Interacts with the chaperonin GroEL.

The protein localises to the cytoplasm. Functionally, together with the chaperonin GroEL, plays an essential role in assisting protein folding. The GroEL-GroES system forms a nano-cage that allows encapsulation of the non-native substrate proteins and provides a physical environment optimized to promote and accelerate protein folding. GroES binds to the apical surface of the GroEL ring, thereby capping the opening of the GroEL channel. The polypeptide is Co-chaperonin GroES (Listeria welshimeri serovar 6b (strain ATCC 35897 / DSM 20650 / CCUG 15529 / CIP 8149 / NCTC 11857 / SLCC 5334 / V8)).